The primary structure comprises 61 residues: Small ribosomal subunit protein uS14 (61 aa).

Residues C24, C27, C40, and C43 each coordinate Zn(2+).

This sequence belongs to the universal ribosomal protein uS14 family. Zinc-binding uS14 subfamily. Part of the 30S ribosomal subunit. Contacts proteins S3 and S10. It depends on Zn(2+) as a cofactor.

In terms of biological role, binds 16S rRNA, required for the assembly of 30S particles and may also be responsible for determining the conformation of the 16S rRNA at the A site. The polypeptide is Small ribosomal subunit protein uS14 (Beutenbergia cavernae (strain ATCC BAA-8 / DSM 12333 / CCUG 43141 / JCM 11478 / NBRC 16432 / NCIMB 13614 / HKI 0122)).